Consider the following 182-residue polypeptide: MTQYFRALAFFLLLVPATAMACDGWPSWARGACQRVDQIWNEGGNDLYLTGYSWHNRAMYSSDKIRSFNELAWGGGLGKSIYDEDGDWQGLYAMAFLDSHSDIEPIAGYGFQKIGRIGADTRLGIGYTVFLTSRSDIMSRVPFPGILPLVSAGYRDATLYATYIPGGKGNGNVLFMFGRWEF.

The N-terminal stretch at 1-21 (MTQYFRALAFFLLLVPATAMA) is a signal peptide. Cys22 is lipidated: N-palmitoyl cysteine. A lipid anchor (S-diacylglycerol cysteine) is attached at Cys22. Active-site residues include His55, Asp98, and Ser99.

It belongs to the lipid A palmitoyltransferase family. As to quaternary structure, homodimer.

It localises to the cell outer membrane. The enzyme catalyses a lipid A + a 1,2-diacyl-sn-glycero-3-phosphocholine = a hepta-acyl lipid A + a 2-acyl-sn-glycero-3-phosphocholine. It carries out the reaction a lipid IVA + a 1,2-diacyl-sn-glycero-3-phosphocholine = a lipid IVB + a 2-acyl-sn-glycero-3-phosphocholine. It catalyses the reaction a lipid IIA + a 1,2-diacyl-sn-glycero-3-phosphocholine = a lipid IIB + a 2-acyl-sn-glycero-3-phosphocholine. In terms of biological role, transfers a fatty acid residue from the sn-1 position of a phospholipid to the N-linked hydroxyfatty acid chain on the proximal unit of lipid A or its precursors. Required for resistance to cationic antimicrobial peptides (CAMPs). Modifications of lipid A with an acyl chain to evade host immune defenses by resisting antibody-mediated complement lysis during respiratory infection. The protein is Lipid A acyltransferase PagP of Bordetella bronchiseptica (strain ATCC BAA-588 / NCTC 13252 / RB50) (Alcaligenes bronchisepticus).